We begin with the raw amino-acid sequence, 397 residues long: ATP-dependent RNA helicase eIF4A (397 aa).

Residues 24–52 (DSFDDMNLKSELLRGIYAYGFERPSAIQQ) carry the Q motif motif. Residues 55-225 (IMPVIKGHDV…TKFMRDPVRI (171 aa)) enclose the Helicase ATP-binding domain. 68-75 (AQSGTGKT) provides a ligand contact to ATP. Residues 173 to 176 (DEAD) carry the DEAD box motif. In terms of domain architecture, Helicase C-terminal spans 236–397 (GIKQFYIAVE…EMPMNVADLI (162 aa)).

The protein belongs to the DEAD box helicase family. eIF4A subfamily. Component of the eIF4F complex, which composition varies with external and internal environmental conditions. It is composed of at least eIF4A, eIF4E and eIF4G.

It is found in the cytoplasm. The enzyme catalyses ATP + H2O = ADP + phosphate + H(+). ATP-dependent RNA helicase which is a subunit of the eIF4F complex involved in cap recognition and is required for mRNA binding to ribosome. In the current model of translation initiation, eIF4A unwinds RNA secondary structures in the 5'-UTR of mRNAs which is necessary to allow efficient binding of the small ribosomal subunit, and subsequent scanning for the initiator codon. The chain is ATP-dependent RNA helicase eIF4A (TIF1) from Chaetomium globosum (strain ATCC 6205 / CBS 148.51 / DSM 1962 / NBRC 6347 / NRRL 1970) (Soil fungus).